The primary structure comprises 947 residues: MTPLSSPLSQYWQTVVERLPEGFTETSLSVQAKSVLTFSDFALDSVIAHPEWLAELESASPQADEWRHYAGWLQEALAGVCDDASLMRELRFFRRRIMVRIAWAQTLSLVDDETILQQLSHLAETLIVGARDWLYAACCREWGTPCNPQGVPQPLLILGMGKLGGGELNFSSDIDLIFAWPEHGETRGGRRELDNAQFFTRLGQRLIKALDQPTMDGFVYRVDMRLRPFGDSGPLVLSFAALEDYYQEQGRDWERYAMVKARLMGDNDDAWSRELRAMLRPFVFRRYIDFSVIQSLRNMKGMIAREVRRRGLKDNIKLGAGGIREIEFIVQVFQLIRGGREPSLQSRSLLPTLDAIAALHLLPENDVAQLRVAYLFLRRLENLLQSINDEQTQTLPADDLNRARLAWGMKAENWPQLVGELTDHMANVRRVFNELIGDDEADTPQEEERSEPWREVWQDALQEDDSTPVLAHLADEERRQVLTLIADFRKELDKRPIGPRGRQVLDQLMPHLLADVCSREDAAVTLSRITPLLAGIVTRTTYLELLSEFPGALKHLIMLCAASPMIASQLARYPLLLDELLDPGTLYQPTATDAYRDELRQYLLRVPEEDEEQQLEALRQFKQAQLLRIAAADIAGTLPVMKVSDHLTWLAEAMIDAVVQQAWTQMVARYGQPAHLDERQGRGFAVVGYGKLGGWELGYSSDLDLIFLHDCPMDVMTNGEREIDGRQFYLRLAQRIMHLFSTRTSSGILYEVDARLRPSGAAGMLVTSADAFADYQQHEAWTWEHQALVRARVVYGDPQLTSQFDAVRRTIMTTARDGKTLQTEVREMREKMRAHLGNKHRDRFDIKADEGGITDIEFIAQYLVLRYAHEKPKLTRWSDNVRILELLAQNGIMDEHEAQALTVAYTTLRDELHHLALQELPGHVAQTCFSKERALVQASWRKWLVAV.

Positions 1–440 are adenylyl removase; it reads MTPLSSPLSQ…VFNELIGDDE (440 aa). Residues 450 to 947 are adenylyl transferase; the sequence is SEPWREVWQD…ASWRKWLVAV (498 aa).

Belongs to the GlnE family. Requires Mg(2+) as cofactor.

It catalyses the reaction [glutamine synthetase]-O(4)-(5'-adenylyl)-L-tyrosine + phosphate = [glutamine synthetase]-L-tyrosine + ADP. It carries out the reaction [glutamine synthetase]-L-tyrosine + ATP = [glutamine synthetase]-O(4)-(5'-adenylyl)-L-tyrosine + diphosphate. Its function is as follows. Involved in the regulation of glutamine synthetase GlnA, a key enzyme in the process to assimilate ammonia. When cellular nitrogen levels are high, the C-terminal adenylyl transferase (AT) inactivates GlnA by covalent transfer of an adenylyl group from ATP to specific tyrosine residue of GlnA, thus reducing its activity. Conversely, when nitrogen levels are low, the N-terminal adenylyl removase (AR) activates GlnA by removing the adenylyl group by phosphorolysis, increasing its activity. The regulatory region of GlnE binds the signal transduction protein PII (GlnB) which indicates the nitrogen status of the cell. This Salmonella typhimurium (strain LT2 / SGSC1412 / ATCC 700720) protein is Bifunctional glutamine synthetase adenylyltransferase/adenylyl-removing enzyme.